The chain runs to 55 residues: Cop-6 protein (55 aa).

It belongs to the transcriptional regulatory CopG/NikR family.

Its function is as follows. Acts in trans as a negative regulatory element in pE194 replication. The sequence is that of Cop-6 protein from Staphylococcus aureus.